The primary structure comprises 351 residues: Rhodopsin (351 aa).

Topologically, residues 1–36 (MNGTEGPFFYIPMSNATGLVRSPYDYPQYYLVPPWG) are extracellular. N-linked (GlcNAc...) asparagine glycans are attached at residues Asn2 and Asn15. Residues 37-61 (YACLAAYMFLLILTGFPVNFLTLYV) form a helical membrane-spanning segment. Residues 62-73 (TIEHKKLRSPLN) are Cytoplasmic-facing. The helical transmembrane segment at 74 to 96 (YILLNLAVADLFMVIGGFTTTMW) threads the bilayer. Over 97 to 110 (TSLNGYFVFGRMGC) the chain is Extracellular. Cys110 and Cys187 form a disulfide bridge. The helical transmembrane segment at 111 to 133 (NIEGFFATLGGEIALWSLVVLSM) threads the bilayer. A 'Ionic lock' involved in activated form stabilization motif is present at residues 134–136 (ERW). The Cytoplasmic portion of the chain corresponds to 134 to 152 (ERWIVVCKPISNFRFGENH). The chain crosses the membrane as a helical span at residues 153–173 (AVMGVAFSWFMAAACAVPPLV). The Extracellular portion of the chain corresponds to 174–202 (GWSRYIPEGMQCSCGIDYYTRAEGFNNES). Residue Asn200 is glycosylated (N-linked (GlcNAc...) asparagine). A helical membrane pass occupies residues 203–224 (FVIYMFVVHFTCPLTIITFCYG). Residues 225 to 252 (RLVCTVKEAAAQQQESETTQRAEREVTR) lie on the Cytoplasmic side of the membrane. The helical transmembrane segment at 253–274 (MVIIMFVAFLACWVPYASVAWY) threads the bilayer. Over 275-286 (IFTHQGSEFGPV) the chain is Extracellular. Residues 287 to 308 (FMTIPAFFAKSSAVYNPVIYIC) traverse the membrane as a helical segment. An N6-(retinylidene)lysine modification is found at Lys296. Topologically, residues 309–351 (LNKQFRHCMITTLCCGKNPFEEEEGSTTASKTEASSVCSVSPA) are cytoplasmic. S-palmitoyl cysteine attachment occurs at residues Cys322 and Cys323. The interval 330 to 351 (EEEGSTTASKTEASSVCSVSPA) is disordered. Over residues 334 to 351 (STTASKTEASSVCSVSPA) the composition is skewed to polar residues.

The protein belongs to the G-protein coupled receptor 1 family. Opsin subfamily. Phosphorylated on some or all of the serine and threonine residues present in the C-terminal region. Post-translationally, contains one covalently linked retinal chromophore.

The protein localises to the membrane. The protein resides in the cell projection. It localises to the cilium. It is found in the photoreceptor outer segment. Its function is as follows. Photoreceptor required for image-forming vision at low light intensity. While most salt water fish species use retinal as chromophore, most freshwater fish use 3-dehydroretinal, or a mixture of retinal and 3-dehydroretinal. Light-induced isomerization of 11-cis to all-trans retinal triggers a conformational change that activates signaling via G-proteins. Subsequent receptor phosphorylation mediates displacement of the bound G-protein alpha subunit by arrestin and terminates signaling. This Sardina pilchardus (European pilchard) protein is Rhodopsin (rho).